The chain runs to 166 residues: Phosphopantetheine adenylyltransferase (166 aa).

Residue Ser11 coordinates substrate. ATP is bound by residues 11 to 12 (SF) and His19. Positions 43, 75, and 89 each coordinate substrate. ATP contacts are provided by residues 90 to 92 (GLR), Glu100, and 125 to 131 (YGYLSSS).

The protein belongs to the bacterial CoaD family. In terms of assembly, homohexamer. Requires Mg(2+) as cofactor.

The protein localises to the cytoplasm. It catalyses the reaction (R)-4'-phosphopantetheine + ATP + H(+) = 3'-dephospho-CoA + diphosphate. Its pathway is cofactor biosynthesis; coenzyme A biosynthesis; CoA from (R)-pantothenate: step 4/5. Reversibly transfers an adenylyl group from ATP to 4'-phosphopantetheine, yielding dephospho-CoA (dPCoA) and pyrophosphate. This chain is Phosphopantetheine adenylyltransferase, found in Syntrophotalea carbinolica (strain DSM 2380 / NBRC 103641 / GraBd1) (Pelobacter carbinolicus).